We begin with the raw amino-acid sequence, 458 residues long: UDP-N-acetylmuramate--L-alanine ligase (458 aa).

ATP is bound at residue 118–124 (GTHGKTT).

Belongs to the MurCDEF family.

It is found in the cytoplasm. The catalysed reaction is UDP-N-acetyl-alpha-D-muramate + L-alanine + ATP = UDP-N-acetyl-alpha-D-muramoyl-L-alanine + ADP + phosphate + H(+). It functions in the pathway cell wall biogenesis; peptidoglycan biosynthesis. Cell wall formation. The polypeptide is UDP-N-acetylmuramate--L-alanine ligase (Clostridium botulinum (strain Loch Maree / Type A3)).